A 1058-amino-acid chain; its full sequence is Bromodomain-containing protein 1 (1058 aa).

Residues 1–12 show a composition bias toward basic residues; the sequence is MRRKGRCHRGSA. Residues 1 to 25 form a disordered region; the sequence is MRRKGRCHRGSAARHPSSPCSIKHS. The segment at 31 to 80 is interaction with KAT7/HBO1 and histones; it reads LTYAQAQRMVEIEIEGRLHRISIFDPLEIILEDDLTAQEMSECNSNKENS. Phosphoserine is present on serine 128. The PHD-type 1 zinc finger occupies 214–264; it reads DAVCCICMDGECQNSNVILFCDMCNLAVHQECYGVPYIPEGQWLCRHCLQS. The C2HC pre-PHD-type zinc-finger motif lies at 268-301; it reads PADCVLCPNKGGAFKKTDDDRWGHVVCALWIPEV. The PHD-type 2 zinc-finger motif lies at 325–389; the sequence is LTCYLCKQKG…RKTAYCDVHT (65 aa). Residues lysine 368, lysine 516, and lysine 519 each carry the N6-acetyllysine modification. Residues lysine 554 and lysine 594 each participate in a glycyl lysine isopeptide (Lys-Gly) (interchain with G-Cter in SUMO2) cross-link. The 105-residue stretch at 562–666 folds into the Bromo domain; sequence LRLTPLTVLL…DQGGVVLRQA (105 aa). The segment covering 754–763 has biased composition (polar residues); it reads KLSQQHSQAP. 2 disordered regions span residues 754 to 776 and 791 to 847; these read KLSQ…EDEA and LETL…AAPR. The residue at position 803 (serine 803) is a Phosphoserine. N6-acetyllysine is present on lysine 903. Positions 929 to 1012 constitute a PWWP domain; it reads PLKVVWAKCS…KSKMVPLGVD (84 aa). Phosphoserine is present on residues serine 1052 and serine 1055.

Component of some HBO1 complexes composed of KAT7/HBO1, MEAF6, ING4 and BRD1/BRPF2. Component of the MOZ/MORF complex composed at least of ING5, KAT6A, KAT6B, MEAF6 and one of BRPF1, BRD1/BRPF2 and BRPF3. Interacts (via PHD-type zinc finger domain) with unmodified histone H3. Interacts (via PWWP domain) with dimethylated and trimethylated 'Lys-79' on histone H3.

The protein resides in the nucleus. It localises to the chromosome. In terms of biological role, scaffold subunit of various histone acetyltransferase (HAT) complexes, such as the MOZ/MORF and HBO1 complexes, that acts as a regulator of hematopoiesis. Plays a key role in HBO1 complex by directing KAT7/HBO1 specificity towards histone H3 'Lys-14' acetylation (H3K14ac), thereby promoting erythroid differentiation. This chain is Bromodomain-containing protein 1, found in Mus musculus (Mouse).